Consider the following 660-residue polypeptide: Bifunctional polymyxin resistance protein ArnA (660 aa).

Residues methionine 1–leucine 304 are formyltransferase ArnAFT. The active-site Proton donor; for formyltransferase activity is the histidine 104. Residues arginine 114 and valine 136–aspartate 140 each bind (6R)-10-formyltetrahydrofolate. The dehydrogenase ArnADH stretch occupies residues arginine 314 to glutamate 660. Residues aspartate 347 and aspartate 368–isoleucine 369 contribute to the NAD(+) site. Residues alanine 393, tyrosine 398, and threonine 432 to serine 433 each bind UDP-alpha-D-glucuronate. Glutamate 434 (proton acceptor; for decarboxylase activity) is an active-site residue. Residues arginine 460, asparagine 492, lysine 526–arginine 535, and tyrosine 613 contribute to the UDP-alpha-D-glucuronate site. The Proton donor; for decarboxylase activity role is filled by arginine 619.

In the N-terminal section; belongs to the Fmt family. UDP-L-Ara4N formyltransferase subfamily. It in the C-terminal section; belongs to the NAD(P)-dependent epimerase/dehydratase family. UDP-glucuronic acid decarboxylase subfamily. Homohexamer, formed by a dimer of trimers.

It catalyses the reaction UDP-alpha-D-glucuronate + NAD(+) = UDP-beta-L-threo-pentopyranos-4-ulose + CO2 + NADH. It carries out the reaction UDP-4-amino-4-deoxy-beta-L-arabinose + (6R)-10-formyltetrahydrofolate = UDP-4-deoxy-4-formamido-beta-L-arabinose + (6S)-5,6,7,8-tetrahydrofolate + H(+). Its pathway is nucleotide-sugar biosynthesis; UDP-4-deoxy-4-formamido-beta-L-arabinose biosynthesis; UDP-4-deoxy-4-formamido-beta-L-arabinose from UDP-alpha-D-glucuronate: step 1/3. It participates in nucleotide-sugar biosynthesis; UDP-4-deoxy-4-formamido-beta-L-arabinose biosynthesis; UDP-4-deoxy-4-formamido-beta-L-arabinose from UDP-alpha-D-glucuronate: step 3/3. It functions in the pathway bacterial outer membrane biogenesis; lipopolysaccharide biosynthesis. In terms of biological role, bifunctional enzyme that catalyzes the oxidative decarboxylation of UDP-glucuronic acid (UDP-GlcUA) to UDP-4-keto-arabinose (UDP-Ara4O) and the addition of a formyl group to UDP-4-amino-4-deoxy-L-arabinose (UDP-L-Ara4N) to form UDP-L-4-formamido-arabinose (UDP-L-Ara4FN). The modified arabinose is attached to lipid A and is required for resistance to polymyxin and cationic antimicrobial peptides. This is Bifunctional polymyxin resistance protein ArnA from Erwinia tasmaniensis (strain DSM 17950 / CFBP 7177 / CIP 109463 / NCPPB 4357 / Et1/99).